Consider the following 960-residue polypeptide: Semaphorin-6C (960 aa).

Positions 1 to 23 (MPRAPHSMPLLLLLLLSLPQAQT) are cleaved as a signal peptide. Residues 24–635 (AFPQDPIPLL…ASASRSIPIP (612 aa)) are Extracellular-facing. Residues 29–515 (PIPLLTSDLQ…FPGCIVYLSL (487 aa)) enclose the Sema domain. The N-linked (GlcNAc...) asparagine glycan is linked to asparagine 69. 4 cysteine pairs are disulfide-bonded: cysteine 110–cysteine 120, cysteine 138–cysteine 147, cysteine 261–cysteine 372, and cysteine 286–cysteine 331. Residue asparagine 285 is glycosylated (N-linked (GlcNAc...) asparagine). N-linked (GlcNAc...) asparagine glycosylation occurs at asparagine 436. Disulfide bonds link cysteine 478–cysteine 509, cysteine 518–cysteine 536, cysteine 524–cysteine 569, and cysteine 528–cysteine 544. The interval 555 to 624 (VDLTGNQESM…HTQGVRRDLS (70 aa)) is disordered. Residues 636–656 (LLLACVAAAFALGASVSGLLV) traverse the membrane as a helical segment. The Cytoplasmic portion of the chain corresponds to 657–960 (SCACRRANRR…PAPHGSHFNF (304 aa)). 3 disordered regions span residues 685-725 (LARL…SPPE), 745-792 (ASGG…PGQE), and 806-960 (HGPQ…HFNF). Residues 899 to 909 (RVPSGGPSRYS) are compositionally biased toward low complexity. The span at 922-935 (PDGHRGRSLKRVDV) shows a compositional bias: basic and acidic residues. The span at 940 to 952 (SPKPPLATPPQPA) shows a compositional bias: pro residues.

Belongs to the semaphorin family. In terms of tissue distribution, expressed in many regions of the developing nervous system, probably in neurons and their precursors, but also in nonneural tissue such as immature muscle and dermis. In adult, strong expression in the skeletal muscle and moderate expression in the brain, where cerebellum shows the highest expression. Also expressed in almost all areas of the CNS.

The protein localises to the cell membrane. Its function is as follows. Shows growth cone collapsing activity on dorsal root ganglion (DRG) neurons in vitro. May be a stop signal for the DRG neurons in their target areas, and possibly also for other neurons. May also be involved in the maintenance and remodeling of neuronal connections. The chain is Semaphorin-6C (Sema6c) from Rattus norvegicus (Rat).